We begin with the raw amino-acid sequence, 210 residues long: Large ribosomal subunit protein uL3 (210 aa).

It belongs to the universal ribosomal protein uL3 family. In terms of assembly, part of the 50S ribosomal subunit. Forms a cluster with proteins L14 and L19.

In terms of biological role, one of the primary rRNA binding proteins, it binds directly near the 3'-end of the 23S rRNA, where it nucleates assembly of the 50S subunit. The protein is Large ribosomal subunit protein uL3 of Pseudothermotoga lettingae (strain ATCC BAA-301 / DSM 14385 / NBRC 107922 / TMO) (Thermotoga lettingae).